The chain runs to 172 residues: dCTP deaminase (172 aa).

DCTP contacts are provided by residues 97–102 (RSSFAR) and Asp113. Glu123 serves as the catalytic Proton donor/acceptor. DCTP contacts are provided by Tyr155 and Gln162.

This sequence belongs to the dCTP deaminase family. In terms of assembly, homotrimer.

The catalysed reaction is dCTP + H2O + H(+) = dUTP + NH4(+). It participates in pyrimidine metabolism; dUMP biosynthesis; dUMP from dCTP (dUTP route): step 1/2. Its function is as follows. Catalyzes the deamination of dCTP to dUTP. This chain is dCTP deaminase, found in Metallosphaera sedula (strain ATCC 51363 / DSM 5348 / JCM 9185 / NBRC 15509 / TH2).